The following is a 468-amino-acid chain: Aldehyde dehydrogenase family 3 member B1 (468 aa).

An N-acetylmethionine modification is found at Met1. Residue 188 to 193 coordinates NAD(+); that stretch reads GSPRVG. Catalysis depends on residues Glu210 and Cys244. The S-palmitoyl cysteine moiety is linked to residue Cys463. Cys465 carries the cysteine methyl ester modification. Cys465 carries S-geranylgeranyl cysteine lipidation. A propeptide spans 466–468 (removed in mature form); it reads TLL.

Belongs to the aldehyde dehydrogenase family. Dually lipidated in the C-terminus; prenylation occurs prior to, and is a prerequisite for palmitoylation. It is also required for activity towards long-chain substrates. In terms of tissue distribution, highest expression in kidney and lung.

It is found in the cell membrane. It carries out the reaction an aldehyde + NADP(+) + H2O = a carboxylate + NADPH + 2 H(+). The catalysed reaction is an aldehyde + NAD(+) + H2O = a carboxylate + NADH + 2 H(+). The enzyme catalyses a long-chain fatty aldehyde + NAD(+) + H2O = a long-chain fatty acid + NADH + 2 H(+). It catalyses the reaction a medium-chain fatty aldehyde + NAD(+) + H2O = a medium-chain fatty acid + NADH + 2 H(+). It carries out the reaction octanal + NAD(+) + H2O = octanoate + NADH + 2 H(+). The catalysed reaction is nonanal + NAD(+) + H2O = nonanoate + NADH + 2 H(+). The enzyme catalyses hexadecanoate + NADH + 2 H(+) = hexadecanal + NAD(+) + H2O. It catalyses the reaction (2E)-octenal + NAD(+) + H2O = (2E)-octenoate + NADH + 2 H(+). It carries out the reaction (E)-non-2-enal + NAD(+) + H2O = (E)-non-2-enoate + NADH + 2 H(+). The catalysed reaction is (E)-4-hydroxynon-2-enal + NAD(+) + H2O = (E)-4-hydroxynon-2-enoate + NADH + 2 H(+). The enzyme catalyses (2E)-hexadecenal + NAD(+) + H2O = (E)-hexadec-2-enoate + NADH + 2 H(+). It catalyses the reaction benzaldehyde + NAD(+) + H2O = benzoate + NADH + 2 H(+). It carries out the reaction a medium-chain fatty aldehyde + NADP(+) + H2O = a medium-chain fatty acid + NADPH + 2 H(+). The catalysed reaction is hexanal + NADP(+) + H2O = hexanoate + NADPH + 2 H(+). The enzyme catalyses octanal + NADP(+) + H2O = octanoate + NADPH + 2 H(+). It catalyses the reaction nonanal + NADP(+) + H2O = nonanoate + NADPH + 2 H(+). It carries out the reaction (2E)-octenal + NADP(+) + H2O = (2E)-octenoate + NADPH + 2 H(+). The catalysed reaction is (E)-non-2-enal + NADP(+) + H2O = (E)-non-2-enoate + NADPH + 2 H(+). The enzyme catalyses (E)-4-hydroxynon-2-enal + NADP(+) + H2O = (E)-4-hydroxynon-2-enoate + NADPH + 2 H(+). It catalyses the reaction benzaldehyde + NADP(+) + H2O = benzoate + NADPH + 2 H(+). It participates in alcohol metabolism; ethanol degradation; acetate from ethanol: step 2/2. Functionally, oxidizes medium and long chain saturated and unsaturated fatty aldehydes generated in the plasma membrane into non-toxic fatty acids. May have a protective role against the cytotoxicity induced by lipid peroxidation. Short-chain fatty aldehydes are not good substrates. Can use both NADP(+) and NAD(+) as electron acceptor in vitro, however in vivo preference will depend on their tissue levels. Low activity towards acetaldehyde and 3,4-dihydroxyphenylacetaldehyde. Able to metabolize aromatic aldehydes such as benzaldehyde to their acid form. In Homo sapiens (Human), this protein is Aldehyde dehydrogenase family 3 member B1 (ALDH3B1).